The chain runs to 224 residues: dTTP/UTP pyrophosphatase (224 aa).

Catalysis depends on D77, which acts as the Proton acceptor.

This sequence belongs to the Maf family. YhdE subfamily. A divalent metal cation serves as cofactor.

The protein localises to the cytoplasm. The enzyme catalyses dTTP + H2O = dTMP + diphosphate + H(+). It carries out the reaction UTP + H2O = UMP + diphosphate + H(+). In terms of biological role, nucleoside triphosphate pyrophosphatase that hydrolyzes dTTP and UTP. May have a dual role in cell division arrest and in preventing the incorporation of modified nucleotides into cellular nucleic acids. In Dehalococcoides mccartyi (strain CBDB1), this protein is dTTP/UTP pyrophosphatase.